Reading from the N-terminus, the 269-residue chain is Aquaporin-1 (269 aa).

Residues 1–11 (MASEIKKKLFW) lie on the Cytoplasmic side of the membrane. A helical transmembrane segment spans residues 12 to 29 (RAVVAEFLAMTLFVFISI). The Extracellular portion of the chain corresponds to 30 to 46 (GSALGFNYPLERNQTLV). Residues 47 to 65 (QDNVKVSLAFGLSIATLAQ) traverse the membrane as a helical segment. Over 66–68 (SVG) the chain is Cytoplasmic. An intramembrane segment occupies 69–82 (HISGAHLNPAVTLG). The NPA 1 motif lies at 76–78 (NPA). The Cytoplasmic portion of the chain corresponds to 83 to 90 (LLLSCQIS). A helical transmembrane segment spans residues 91–109 (ILRAVMYIIAQCVGAIVAT). The Extracellular segment spans residues 110 to 133 (AILSGITSSLVDNSLGRNDLAHGV). A helical transmembrane segment spans residues 134 to 153 (NSGQGLGIEIIGTLQLVLCV). The Cytoplasmic portion of the chain corresponds to 154-163 (LATTDRRRRD). A helical membrane pass occupies residues 164-181 (LGGSAPLAIGLSVALGHL). Residues 182–186 (LAIDY) lie on the Extracellular side of the membrane. The stretch at 187–199 (TGCGINPARSFGS) is an intramembrane region. Positions 192 to 194 (NPA) match the NPA 2 motif. Residues 200–206 (AVLTRNF) lie on the Extracellular side of the membrane. A glycan (N-linked (GlcNAc...) asparagine) is linked at asparagine 205. The helical transmembrane segment at 207–224 (SNHWIFWVGPFIGGALAV) threads the bilayer. Residues 225-269 (LIYDFILAPRSSDFTDRMKVWTSGQVEEYDLDADDINSRVEMKPK) lie on the Cytoplasmic side of the membrane. Serine 247 bears the Phosphoserine mark. Tyrosine 253 is modified (phosphotyrosine). Serine 262 bears the Phosphoserine mark.

The protein belongs to the MIP/aquaporin (TC 1.A.8) family. In terms of assembly, homotetramer; each monomer provides an independent water pore. Component of the ankyrin-1 complex in the erythrocyte, composed of ANK1, RHCE, RHAG, SLC4A1, EPB42, GYPA, GYPB and AQP1. Interacts with EPHB2; involved in endolymph production in the inner ear. Identified in a complex with STOM. Interacts (via the N-terminal) with ANK1 (via ANK 1-5 repeats). Interacts (via the C-terminal) with EPB42. In terms of tissue distribution, detected in erythrocytes (at protein level). In the kidney, expressed on luminal and basal borders of proximal tubules and in the thin limb of Henle's loop (at protein level).

It localises to the cell membrane. The enzyme catalyses H2O(in) = H2O(out). The catalysed reaction is nitric oxide(out) = nitric oxide(in). It carries out the reaction CO2(out) = CO2(in). It catalyses the reaction glycerol(in) = glycerol(out). The enzyme catalyses H2O2(out) = H2O2(in). The catalysed reaction is K(+)(in) = K(+)(out). It carries out the reaction Na(+)(in) = Na(+)(out). Forms a water channel that facilitates the transport of water across cell membranes, playing a crucial role in water homeostasis in various tissues. Could also be permeable to small solutes including hydrogen peroxide, glycerol and gases such as amonnia (NH3), nitric oxide (NO) and carbon dioxide (CO2). Recruited to the ankyrin-1 complex, a multiprotein complex of the erythrocyte membrane, it could be part of a CO2 metabolon, linking facilitated diffusion of CO2 across the membrane, anion exchange of Cl(-)/HCO3(-) and interconversion of dissolved CO2 and carbonic acid in the cytosol. In vitro, it shows non-selective gated cation channel activity and may be permeable to cations like K(+) and Na(+) in vivo. In Mus musculus (Mouse), this protein is Aquaporin-1.